We begin with the raw amino-acid sequence, 159 residues long: Probable acetolactate synthase small subunit (159 aa).

In terms of domain architecture, ACT spans 4–78 (TIAVLVENKP…ETIKVSEITE (75 aa)).

The protein belongs to the acetolactate synthase small subunit family. In terms of assembly, dimer of large and small chains.

It catalyses the reaction 2 pyruvate + H(+) = (2S)-2-acetolactate + CO2. It participates in amino-acid biosynthesis; L-isoleucine biosynthesis; L-isoleucine from 2-oxobutanoate: step 1/4. The protein operates within amino-acid biosynthesis; L-valine biosynthesis; L-valine from pyruvate: step 1/4. The sequence is that of Probable acetolactate synthase small subunit (ilvH) from Archaeoglobus fulgidus (strain ATCC 49558 / DSM 4304 / JCM 9628 / NBRC 100126 / VC-16).